The sequence spans 306 residues: Ribonuclease HIII (306 aa).

An RNase H type-2 domain is found at 87–302 (WSVVGSDEVG…TKKAEALAKK (216 aa)). A divalent metal cation is bound by residues Asp-93, Glu-94, and Asp-196.

It belongs to the RNase HII family. RnhC subfamily. It depends on Mn(2+) as a cofactor. The cofactor is Mg(2+).

It localises to the cytoplasm. It carries out the reaction Endonucleolytic cleavage to 5'-phosphomonoester.. Functionally, endonuclease that specifically degrades the RNA of RNA-DNA hybrids. The protein is Ribonuclease HIII of Exiguobacterium sibiricum (strain DSM 17290 / CCUG 55495 / CIP 109462 / JCM 13490 / 255-15).